We begin with the raw amino-acid sequence, 395 residues long: NAD(P)H-quinone oxidoreductase subunit H (395 aa).

The protein belongs to the complex I 49 kDa subunit family. NDH-1 can be composed of about 15 different subunits; different subcomplexes with different compositions have been identified which probably have different functions.

Its subcellular location is the cellular thylakoid membrane. It catalyses the reaction a plastoquinone + NADH + (n+1) H(+)(in) = a plastoquinol + NAD(+) + n H(+)(out). It carries out the reaction a plastoquinone + NADPH + (n+1) H(+)(in) = a plastoquinol + NADP(+) + n H(+)(out). NDH-1 shuttles electrons from an unknown electron donor, via FMN and iron-sulfur (Fe-S) centers, to quinones in the respiratory and/or the photosynthetic chain. The immediate electron acceptor for the enzyme in this species is believed to be plastoquinone. Couples the redox reaction to proton translocation, and thus conserves the redox energy in a proton gradient. Cyanobacterial NDH-1 also plays a role in inorganic carbon-concentration. In Prochlorococcus marinus subsp. pastoris (strain CCMP1986 / NIES-2087 / MED4), this protein is NAD(P)H-quinone oxidoreductase subunit H.